The sequence spans 64 residues: Translation machinery-associated protein 7 homolog (64 aa).

Residues 1-64 form a disordered region; that stretch reads MSGRQGGKAK…GGGIKKSGKK (64 aa). The stretch at 21-50 forms a coiled coil; that stretch reads DLSEEDVEFKKKQQEEAKKIKEMAAKAGQR. The segment covering 28-44 has biased composition (basic and acidic residues); it reads EFKKKQQEEAKKIKEMA. Positions 53–64 are enriched in gly residues; sequence LLGGGIKKSGKK.

The protein belongs to the TMA7 family.

This chain is Translation machinery-associated protein 7 homolog, found in Caenorhabditis elegans.